The primary structure comprises 357 residues: Protein MGF 360-8L (357 aa).

The protein belongs to the asfivirus MGF 360 family.

Plays a role in virus cell tropism, and may be required for efficient virus replication in macrophages. This chain is Protein MGF 360-8L, found in African swine fever virus (isolate Tick/South Africa/Pretoriuskop Pr4/1996) (ASFV).